The primary structure comprises 276 residues: Formamidopyrimidine-DNA glycosylase (276 aa).

P2 functions as the Schiff-base intermediate with DNA in the catalytic mechanism. Catalysis depends on E3, which acts as the Proton donor. The active-site Proton donor; for beta-elimination activity is K59. The DNA site is built by H92, R111, and K155. Residues 239–273 (AVYGQTGAPCPRCGTAIEKIKVGGRGTHFCPTCQQ) form an FPG-type zinc finger. The active-site Proton donor; for delta-elimination activity is R263.

This sequence belongs to the FPG family. Monomer. It depends on Zn(2+) as a cofactor.

It carries out the reaction Hydrolysis of DNA containing ring-opened 7-methylguanine residues, releasing 2,6-diamino-4-hydroxy-5-(N-methyl)formamidopyrimidine.. The enzyme catalyses 2'-deoxyribonucleotide-(2'-deoxyribose 5'-phosphate)-2'-deoxyribonucleotide-DNA = a 3'-end 2'-deoxyribonucleotide-(2,3-dehydro-2,3-deoxyribose 5'-phosphate)-DNA + a 5'-end 5'-phospho-2'-deoxyribonucleoside-DNA + H(+). In terms of biological role, involved in base excision repair of DNA damaged by oxidation or by mutagenic agents. Acts as a DNA glycosylase that recognizes and removes damaged bases. Has a preference for oxidized purines, such as 7,8-dihydro-8-oxoguanine (8-oxoG). Has AP (apurinic/apyrimidinic) lyase activity and introduces nicks in the DNA strand. Cleaves the DNA backbone by beta-delta elimination to generate a single-strand break at the site of the removed base with both 3'- and 5'-phosphates. In Exiguobacterium sibiricum (strain DSM 17290 / CCUG 55495 / CIP 109462 / JCM 13490 / 255-15), this protein is Formamidopyrimidine-DNA glycosylase.